The primary structure comprises 1160 residues: Transcription factor tau 138 kDa subunit (1160 aa).

The disordered stretch occupies residues Pro475–Thr533. Over residues Thr480–Val490 the composition is skewed to basic residues. Composition is skewed to polar residues over residues Lys491–Asn504 and His513–Ser529. Ser546 carries the phosphoserine modification.

As to quaternary structure, component of the TFIIIC complex composed of TFC1, TFC3, TFC4, TFC6, TFC7 and TFC8. The subunits are organized in two globular domains, tauA and tauB, connected by a proteolysis-sensitive and flexible linker. Interacts with TFC1, TFC4 and TFC6.

The protein localises to the nucleus. The protein resides in the mitochondrion. TFIIIC mediates tRNA and 5S RNA gene activation by binding to intragenic promoter elements. Upstream of the transcription start site, TFIIIC assembles the initiation complex TFIIIB-TFIIIC-tDNA, which is sufficient for RNA polymerase III recruitment and function. Part of the tauB domain of TFIIIC that binds boxB DNA promoter sites of tRNA and similar genes. TFC3 is essential for cell viability. Cooperates with TFC6 in DNA binding. The polypeptide is Transcription factor tau 138 kDa subunit (TFC3) (Saccharomyces cerevisiae (strain ATCC 204508 / S288c) (Baker's yeast)).